Reading from the N-terminus, the 209-residue chain is MTTALDLALNAADGALRTLFAKPRASRTCPTVPAQATELSLEDKALSGALMRVNHVGEVCAQALYAAQALGTRDAVLRKHFLKASQEEGDHLAWTKDRLDELGARPSLLNPLWYAGAFGLGLVASRLGDRLSLGFVVETERQVEAHLASHLERLPEGDHESRAIVAQMKDDEALHASAAEDAGALQLPAPVKMLMRSAAKVMTTVAHRI.

E58, E88, H91, E140, E172, and H175 together coordinate Fe cation.

This sequence belongs to the COQ7 family. Fe cation serves as cofactor.

It localises to the cell membrane. It carries out the reaction a 5-methoxy-2-methyl-3-(all-trans-polyprenyl)benzene-1,4-diol + AH2 + O2 = a 3-demethylubiquinol + A + H2O. Its pathway is cofactor biosynthesis; ubiquinone biosynthesis. Catalyzes the hydroxylation of 2-nonaprenyl-3-methyl-6-methoxy-1,4-benzoquinol during ubiquinone biosynthesis. This chain is 3-demethoxyubiquinol 3-hydroxylase, found in Polaromonas naphthalenivorans (strain CJ2).